The chain runs to 300 residues: Delta-9 desaturase-like 4 protein (300 aa).

2 helical membrane passes run 39–59 and 61–81; these read VVVI…WEAL and FGLV…HRNL. The short motif at 78-83 is the Histidine box-1 element; that stretch reads HRNLSH. A Histidine box-2 motif is present at residues 115–119; it reads HRFHH. The next 2 membrane-spanning stretches (helical) occupy residues 175 to 195 and 200 to 220; these read IAVH…LPYL and GVGI…CHIW. Residues 247 to 251 carry the Histidine box-3 motif; the sequence is HNNHH.

It belongs to the fatty acid desaturase type 1 family. The cofactor is Fe cation.

Its subcellular location is the endoplasmic reticulum membrane. It functions in the pathway lipid metabolism; polyunsaturated fatty acid biosynthesis. This chain is Delta-9 desaturase-like 4 protein, found in Arabidopsis thaliana (Mouse-ear cress).